The primary structure comprises 499 residues: Bifunctional purine biosynthesis protein PurH (499 aa).

Positions 1–144 (MIKRALISVF…KNFKDVVVLT (144 aa)) constitute an MGS-like domain.

It belongs to the PurH family.

The enzyme catalyses (6R)-10-formyltetrahydrofolate + 5-amino-1-(5-phospho-beta-D-ribosyl)imidazole-4-carboxamide = 5-formamido-1-(5-phospho-D-ribosyl)imidazole-4-carboxamide + (6S)-5,6,7,8-tetrahydrofolate. The catalysed reaction is IMP + H2O = 5-formamido-1-(5-phospho-D-ribosyl)imidazole-4-carboxamide. Its pathway is purine metabolism; IMP biosynthesis via de novo pathway; 5-formamido-1-(5-phospho-D-ribosyl)imidazole-4-carboxamide from 5-amino-1-(5-phospho-D-ribosyl)imidazole-4-carboxamide (10-formyl THF route): step 1/1. It functions in the pathway purine metabolism; IMP biosynthesis via de novo pathway; IMP from 5-formamido-1-(5-phospho-D-ribosyl)imidazole-4-carboxamide: step 1/1. In Clostridium botulinum (strain Hall / ATCC 3502 / NCTC 13319 / Type A), this protein is Bifunctional purine biosynthesis protein PurH.